Here is a 496-residue protein sequence, read N- to C-terminus: Lysine--tRNA ligase (496 aa).

Glu409 and Glu416 together coordinate Mg(2+).

It belongs to the class-II aminoacyl-tRNA synthetase family. As to quaternary structure, homodimer. The cofactor is Mg(2+).

It localises to the cytoplasm. It carries out the reaction tRNA(Lys) + L-lysine + ATP = L-lysyl-tRNA(Lys) + AMP + diphosphate. This Streptococcus sanguinis (strain SK36) protein is Lysine--tRNA ligase.